A 287-amino-acid polypeptide reads, in one-letter code: Probable ABC transporter extracellular-binding protein YckB (287 aa).

A signal peptide spans 1 to 24; the sequence is MKSFMHSKAVIFSFTMAFFLILAA. A lipid anchor (N-palmitoyl cysteine) is attached at C25. C25 carries the S-diacylglycerol cysteine lipid modification.

It belongs to the bacterial solute-binding protein 3 family.

The protein resides in the cell membrane. In terms of biological role, probably part of a binding-protein-dependent transport system. This is Probable ABC transporter extracellular-binding protein YckB (yckB) from Bacillus subtilis (strain 168).